A 279-amino-acid polypeptide reads, in one-letter code: uncharacterized protein (279 aa).

This is an uncharacterized protein from Borreliella burgdorferi (strain ATCC 35210 / DSM 4680 / CIP 102532 / B31) (Borrelia burgdorferi).